The sequence spans 265 residues: DNA repair protein RecO (265 aa).

Belongs to the RecO family.

In terms of biological role, involved in DNA repair and RecF pathway recombination. This Mycolicibacterium paratuberculosis (strain ATCC BAA-968 / K-10) (Mycobacterium paratuberculosis) protein is DNA repair protein RecO.